The sequence spans 635 residues: Signal recognition particle subunit SRP72 (635 aa).

TPR repeat units lie at residues 7–42 (GGLYQCLTDISRADTSGDYQKALTSANKLIRKYPKE), 75–105 (GHVGFEKAYIHYRQDELDEAIKELNTCDKDD), 106–139 (VKALELKAQVFYKQENYQQAYDIYLYLLKNHSDD), 171–204 (YSQLYNRACVEIEAEKLPQALESLEKALKTCRKS), 220–253 (DSIRVQKAYVLQRMGQKAEALAIYEKVQAANHPD), 255–290 (SVKATITNNIPAASSDFALPESRKRFKAALQIDQTK), and 436–469 (VEVEQQRGNETAATKHLEKLVEKFPEDLQLQCRL). The interval 539-635 (KRKRKIRLPK…QKKKKNASKF (97 aa)) is disordered. Positions 557-569 (DPERWLPRQERST) are enriched in basic and acidic residues. Positions 625–635 (KQKKKKNASKF) are enriched in basic residues.

Belongs to the SRP72 family. As to quaternary structure, heterodimer with srpa-68. Srpa-68-srpa-72 heterodimer formation is stabilized by the presence of 7SL RNA. Component of a signal recognition particle (SRP) complex that consists of a 7SL RNA molecule of 300 nucleotides and six protein subunits: srpa-72, srpa-68, SRP54, F37F2.2/SRP19, F25G6.8/SRP14 and ZK512.4/SRP9. Within the SRP complex, interacts (via N-terminus) with srpa-68 (via C-terminus).

The protein resides in the cytoplasm. Its subcellular location is the endoplasmic reticulum. In terms of biological role, component of the signal recognition particle (SRP) complex, a ribonucleoprotein complex that mediates the cotranslational targeting of secretory and membrane proteins to the endoplasmic reticulum (ER). The SRP complex interacts with the signal sequence in nascent secretory and membrane proteins and directs them to the membrane of the ER. The SRP complex targets the ribosome-nascent chain complex to the SRP receptor (SR), which is anchored in the ER, where SR compaction and GTPase rearrangement drive cotranslational protein translocation into the ER. Binds the signal recognition particle RNA (7SL RNA) in presence of srpa-68. Can bind 7SL RNA with low affinity. The SRP complex possibly participates in the elongation arrest function. This Caenorhabditis elegans protein is Signal recognition particle subunit SRP72.